The sequence spans 97 residues: Putative pterin-4-alpha-carbinolamine dehydratase (97 aa).

Belongs to the pterin-4-alpha-carbinolamine dehydratase family.

It catalyses the reaction (4aS,6R)-4a-hydroxy-L-erythro-5,6,7,8-tetrahydrobiopterin = (6R)-L-erythro-6,7-dihydrobiopterin + H2O. The protein is Putative pterin-4-alpha-carbinolamine dehydratase of Opitutus terrae (strain DSM 11246 / JCM 15787 / PB90-1).